A 489-amino-acid polypeptide reads, in one-letter code: uncharacterized protein (489 aa).

The 2Fe-2S ferredoxin-type domain occupies 2–84; that stretch reads IKITVKRFNG…GMIIEPLRGF (83 aa). Positions 48, 53, 56, and 68 each coordinate [2Fe-2S] cluster. 4Fe-4S ferredoxin-type domains are found at residues 123–155 and 177–205; these read KYVEENKELRGCIDCLSCLSVCPAREVSDYPGP and TAYFENIYNCTTCAKCVEVCPKEIDIVHR. Positions 134, 137, 140, 144, 186, 189, 192, and 196 each coordinate [4Fe-4S] cluster.

It belongs to the succinate dehydrogenase/fumarate reductase iron-sulfur protein family.

This is an uncharacterized protein from Methanocaldococcus jannaschii (strain ATCC 43067 / DSM 2661 / JAL-1 / JCM 10045 / NBRC 100440) (Methanococcus jannaschii).